The following is a 425-amino-acid chain: MSTQPATIADSATDLVEGLARAARSAQRQLARMDSPVKERALTLAAAALRAAEAEILAANAQDMANGAANGLSSAMLDRLKLTPERLAGIADAVAQVAGLADPVGEVISEAARPNGMVLQRVRIPVGVIGIIYESRPNVTADAAALCVRSGNAAILRGGSEAVHSNRAIHKALVAGLAEGGVPAEAVQLVPTQDRAAVGAMLGAAGLIDMIVPRGGKSLVARVQADARVPVLAHLDGINHTFVHASADPAMAQAIVLNAKMRRTGVCGAMETLLIDATYPDPHGLVEPLLDAGCELRGDARARAIDPRIAPAADNDWDTEYLEAILSVAVVDGLDEALAHIARHASGHTDAIVAADQDVADRFLAEVDSAIVMHNASSQFADGGEFGLGAEIGIATGRLHARGPVALEGLTTYKWLVRGSGQTRP.

It belongs to the gamma-glutamyl phosphate reductase family.

Its subcellular location is the cytoplasm. The catalysed reaction is L-glutamate 5-semialdehyde + phosphate + NADP(+) = L-glutamyl 5-phosphate + NADPH + H(+). It functions in the pathway amino-acid biosynthesis; L-proline biosynthesis; L-glutamate 5-semialdehyde from L-glutamate: step 2/2. Functionally, catalyzes the NADPH-dependent reduction of L-glutamate 5-phosphate into L-glutamate 5-semialdehyde and phosphate. The product spontaneously undergoes cyclization to form 1-pyrroline-5-carboxylate. The polypeptide is Gamma-glutamyl phosphate reductase (Novosphingobium aromaticivorans (strain ATCC 700278 / DSM 12444 / CCUG 56034 / CIP 105152 / NBRC 16084 / F199)).